A 235-amino-acid polypeptide reads, in one-letter code: Maximins-S type A (235 aa).

A signal peptide spans 1–18; sequence MNFNYFILVLFFITSGHA. 2 consecutive propeptides follow at residues 19–35 and 52–65; these read KSET…HIKR and SAEE…LVKR. An Asparagine amide modification is found at asparagine 83. A propeptide spanning residues 87 to 100 is cleaved from the precursor; the sequence is SAEEQDLAEDLVTR. An Asparagine amide modification is found at asparagine 118. Positions 122-135 are excised as a propeptide; that stretch reads SAEEQDLAEDLVKR. Asparagine amide is present on asparagine 153. The propeptide occupies 157 to 170; sequence SAEEQDLAEDLVTR. Lysine 188 is modified (lysine amide). Positions 192-205 are excised as a propeptide; sequence SAEDQDLAEDLVTR. Lysine amide is present on lysine 223. Residues 227–235 constitute a propeptide that is removed on maturation; sequence SAEQEKDMK.

The protein belongs to the maximin-S family. As to expression, expressed by the skin dorsal glands.

It is found in the secreted. Maximin-S1 has no antimicrobial activity. Has no hemolytic activity. Its function is as follows. Maximin-S2 has an activity against mycoplasma but has no activity against common Gram-positive and Gram-negative bacteria nor fungi. Has no hemolytic activity. In terms of biological role, maximin-S3 has an activity against mycoplasma but has no activity against common Gram-positive and Gram-negative bacteria nor fungi. Has no hemolytic activity. Functionally, maximin-S4 has an activity against mycoplasma but has no activity against common Gram-positive and Gram-negative bacteria nor fungi. Has no hemolytic activity. Maximin-S5 has an activity against mycoplasma but has no activity against common Gram-positive and Gram-negative bacteria nor fungi. Has no hemolytic activity. The chain is Maximins-S type A from Bombina maxima (Giant fire-bellied toad).